Here is a 328-residue protein sequence, read N- to C-terminus: Transcriptional regulator protein Pur-beta-B (328 aa).

Disordered regions lie at residues 1–35 (MADG…ELAS), 100–124 (SPEQ…RALK), and 289–328 (QERQ…VDDD). A2 is subject to N-acetylalanine. The span at 9-18 (ERGGSSGGPS) shows a compositional bias: gly residues. A compositionally biased stretch (basic and acidic residues) spans 24–35 (MSREQETQELAS). The DNA-binding stretch occupies residues 27-260 (EQETQELASK…LRVSEVKPSY (234 aa)). Positions 289-303 (QERQRDKMYDRRGPG) are enriched in basic and acidic residues. Residues 304 to 317 (ERGGSLGPGAGGGG) show a composition bias toward gly residues. Residues 318–328 (DDSETEDVDDD) are compositionally biased toward acidic residues.

It belongs to the PUR DNA-binding protein family.

The protein localises to the nucleus. Its function is as follows. Transcriptional regulator which can act as an activator or a repressor. The chain is Transcriptional regulator protein Pur-beta-B (purb-b) from Xenopus laevis (African clawed frog).